Reading from the N-terminus, the 97-residue chain is Small ribosomal subunit protein bS6 (97 aa).

This sequence belongs to the bacterial ribosomal protein bS6 family.

Its function is as follows. Binds together with bS18 to 16S ribosomal RNA. The polypeptide is Small ribosomal subunit protein bS6 (Lactococcus lactis subsp. cremoris (strain MG1363)).